Reading from the N-terminus, the 230-residue chain is Ribosomal RNA large subunit methyltransferase E (230 aa).

Gly82, Trp84, Asp100, Asp116, and Asp140 together coordinate S-adenosyl-L-methionine. Lys180 serves as the catalytic Proton acceptor.

This sequence belongs to the class I-like SAM-binding methyltransferase superfamily. RNA methyltransferase RlmE family.

The protein localises to the cytoplasm. It carries out the reaction uridine(2552) in 23S rRNA + S-adenosyl-L-methionine = 2'-O-methyluridine(2552) in 23S rRNA + S-adenosyl-L-homocysteine + H(+). Its function is as follows. Specifically methylates the uridine in position 2552 of 23S rRNA at the 2'-O position of the ribose in the fully assembled 50S ribosomal subunit. The polypeptide is Ribosomal RNA large subunit methyltransferase E (Granulibacter bethesdensis (strain ATCC BAA-1260 / CGDNIH1)).